We begin with the raw amino-acid sequence, 98 residues long: NADH-ubiquinone oxidoreductase chain 4L (98 aa).

Helical transmembrane passes span 2–22, 29–49, and 61–81; these read PPIFTNVILAFATAFLGTLIF, SLLCLEGMMLSLFILSTLIIL, and ILLLVFAACEAAIGLALLVMV.

This sequence belongs to the complex I subunit 4L family. In terms of assembly, core subunit of respiratory chain NADH dehydrogenase (Complex I) which is composed of 45 different subunits.

The protein resides in the mitochondrion inner membrane. It catalyses the reaction a ubiquinone + NADH + 5 H(+)(in) = a ubiquinol + NAD(+) + 4 H(+)(out). In terms of biological role, core subunit of the mitochondrial membrane respiratory chain NADH dehydrogenase (Complex I) which catalyzes electron transfer from NADH through the respiratory chain, using ubiquinone as an electron acceptor. Part of the enzyme membrane arm which is embedded in the lipid bilayer and involved in proton translocation. The sequence is that of NADH-ubiquinone oxidoreductase chain 4L (MT-ND4L) from Avahi occidentalis (Western woolly lemur).